Reading from the N-terminus, the 230-residue chain is UPF0688 protein C1orf174 homolog (230 aa).

2 disordered regions span residues 1-85 and 97-166; these read MRSR…SLPK and AEDS…VRAS. Residues 11-30 are compositionally biased toward low complexity; that stretch reads RSSARLRARSYSSASLASAR. Positions 31–48 are enriched in polar residues; it reads DVTSSTSAKTTCLASSSH. The segment covering 49-78 has biased composition (basic and acidic residues); the sequence is KATDRRTSKKFKYDKGHLVKAELQKLDPKS. Phosphoserine is present on Ser-180.

The protein belongs to the UPF0688 family.

Its subcellular location is the nucleus. The polypeptide is UPF0688 protein C1orf174 homolog (Mus musculus (Mouse)).